A 623-amino-acid chain; its full sequence is Methionine--tRNA ligase (623 aa).

The 'HIGH' region signature appears at 11 to 21; sequence PYANGPRHIGH. Residues cysteine 143, cysteine 146, cysteine 156, and cysteine 159 each coordinate Zn(2+). The short motif at 347–351 is the 'KMSKS' region element; the sequence is KFSSS. Serine 350 contacts ATP.

This sequence belongs to the class-I aminoacyl-tRNA synthetase family. MetG type 1 subfamily. As to quaternary structure, monomer. Zn(2+) serves as cofactor.

Its subcellular location is the cytoplasm. It carries out the reaction tRNA(Met) + L-methionine + ATP = L-methionyl-tRNA(Met) + AMP + diphosphate. Is required not only for elongation of protein synthesis but also for the initiation of all mRNA translation through initiator tRNA(fMet) aminoacylation. The protein is Methionine--tRNA ligase of Bifidobacterium animalis subsp. lactis (strain AD011).